The sequence spans 421 residues: UDP-N-acetylglucosamine 1-carboxyvinyltransferase (421 aa).

22-23 (KN) provides a ligand contact to phosphoenolpyruvate. Residue Arg-93 coordinates UDP-N-acetyl-alpha-D-glucosamine. The active-site Proton donor is the Cys-117. 2-(S-cysteinyl)pyruvic acid O-phosphothioketal is present on Cys-117. UDP-N-acetyl-alpha-D-glucosamine contacts are provided by residues 122–126 (RPVDL), Asp-308, and Ile-330.

This sequence belongs to the EPSP synthase family. MurA subfamily.

The protein resides in the cytoplasm. The enzyme catalyses phosphoenolpyruvate + UDP-N-acetyl-alpha-D-glucosamine = UDP-N-acetyl-3-O-(1-carboxyvinyl)-alpha-D-glucosamine + phosphate. It functions in the pathway cell wall biogenesis; peptidoglycan biosynthesis. Cell wall formation. Adds enolpyruvyl to UDP-N-acetylglucosamine. The polypeptide is UDP-N-acetylglucosamine 1-carboxyvinyltransferase (Pseudomonas savastanoi pv. phaseolicola (strain 1448A / Race 6) (Pseudomonas syringae pv. phaseolicola (strain 1448A / Race 6))).